The primary structure comprises 415 residues: MDFLKNQDPAVYEIFEKELQRQTDHLEMIASENFTSPAVMEAMGSVFTNKYAEGYPGKRYYGGCEYADAIEELAIQRAKELFGCEFVNVQPHSGSQANQGVYLALLKPYDKILGMDLSHGGHLTHGAKVNASGKIYQSFFYGVNDEGWIDYDRVLDIAKIVKPKLIVCGASAYPRVIDFKKFREIADEVGALLMADIAHIAGLVAAGEHPSPFPYCDVVTTTTHKTLRGPRGGMIMTNDADIAKKINSAIFPGIQGGPLVHVIAAKAVGFGENLKPEWKEYAKQMRINASTLATVLMNRGYNVVSGGTDNHLVLVSFLDKDFSGKDADEALGRAGITVNKNTVPGETRSPFVTSGIRIGSPALTARGMKEAEFELIANKIADVLDNIHDVNLHEKIKEEMVALARKFVIYDRPTY.

(6S)-5,6,7,8-tetrahydrofolate-binding positions include leucine 117 and 121–123; that span reads GHL. At lysine 225 the chain carries N6-(pyridoxal phosphate)lysine. Position 349–351 (349–351) interacts with (6S)-5,6,7,8-tetrahydrofolate; sequence SPF.

The protein belongs to the SHMT family. Homodimer. It depends on pyridoxal 5'-phosphate as a cofactor.

It localises to the cytoplasm. The enzyme catalyses (6R)-5,10-methylene-5,6,7,8-tetrahydrofolate + glycine + H2O = (6S)-5,6,7,8-tetrahydrofolate + L-serine. It functions in the pathway one-carbon metabolism; tetrahydrofolate interconversion. It participates in amino-acid biosynthesis; glycine biosynthesis; glycine from L-serine: step 1/1. Its function is as follows. Catalyzes the reversible interconversion of serine and glycine with tetrahydrofolate (THF) serving as the one-carbon carrier. This reaction serves as the major source of one-carbon groups required for the biosynthesis of purines, thymidylate, methionine, and other important biomolecules. Also exhibits THF-independent aldolase activity toward beta-hydroxyamino acids, producing glycine and aldehydes, via a retro-aldol mechanism. The chain is Serine hydroxymethyltransferase from Nitratiruptor sp. (strain SB155-2).